A 381-amino-acid chain; its full sequence is Endolytic peptidoglycan transglycosylase RlpA (381 aa).

The N-terminal stretch at 1–19 (MRKQLPVICVAAGIVLLAA) is a signal peptide. The N-palmitoyl cysteine moiety is linked to residue Cys-20. Cys-20 carries S-diacylglycerol cysteine lipidation. Positions 196–274 (LPPRPDLSGG…QPAPVSAPVA (79 aa)) are disordered. A compositionally biased stretch (low complexity) spans 208–218 (SASSAPAQPQG). In terms of domain architecture, SPOR spans 304-380 (AAASGRFVVQ…AQLQSFIASA (77 aa)).

Belongs to the RlpA family.

Its subcellular location is the cell membrane. Functionally, lytic transglycosylase with a strong preference for naked glycan strands that lack stem peptides. This is Endolytic peptidoglycan transglycosylase RlpA from Salmonella typhimurium (strain LT2 / SGSC1412 / ATCC 700720).